Here is a 547-residue protein sequence, read N- to C-terminus: Cytochrome P450 monooxygenase fsoD (547 aa).

A helical transmembrane segment spans residues 3 to 23 (DITLAAVSIGLFFYVGARAVL). Cys-490 lines the heme pocket.

It belongs to the cytochrome P450 family. Heme serves as cofactor.

It localises to the membrane. The catalysed reaction is isomotiol + reduced [NADPH--hemoprotein reductase] + O2 = 2alpha-hydroxyisomotiol + oxidized [NADPH--hemoprotein reductase] + H2O + H(+). It participates in secondary metabolite biosynthesis; terpenoid biosynthesis. Functionally, cytochrome P450 monooxygenase; part of the gene cluster that mediates the biosynthesis of the enfumafungin-type antibiotic, fuscoatroside. Within the pathway, fsoD catalyzes the hydroxylation at position C2 of isomotiol to produce 2-alpha-hydroxy-isomotiol. FsoD may also hydroxylate the intermediates 3-O-(beta-D-glucopyranosyl)-isomotiol and 2-deacetoxy-fuscoatroside at the same position C2. The fuscoatroside biosynthesis is initiated by the cyclization of 2,3(S)-oxidosqualene through FsoA's terpene cyclase (TC) domain, leading to the formation of the fernane skeleton isomotiol, harboring a fernane triterpene skeleton with a C8-C9 double bond. Subsequently, C2-alpha-hydroxylation mediated by fsoD results in the production of 2-alpha-hydroxy-isomotiol, which is further acetylated by fsoF. The glycosyltransferase (GT) domain of FsoA may convert isomotiol, 2-alpha-hydroxy-isomotiol, and the acetylated derivative of 2-alpha-hydroxy-isomotiol into their corresponding glycosides 3-O-(beta-D-glucopyranosyl)-isomotiol, 3-O-(beta-D-glucopyranosyl)-2-alpha-hydroxy-isomotiol, and 3-O-(beta-D-glucopyranosyl)-2-alpha-acetoxy-isomotiol, which then undergo oxidative cleavage under the action of fsoE to form s 2-deacetoxy-fuscoatroside, 2-deacetyl-fuscoatroside, and fuscoatroside, respectively. Although hydroxylation followed by acetylation of 3-O-(beta-D-glucopyranosyl)-isomotiol and 2-deacetoxy-fuscoatroside by fsoD and fsoF could not be ruled out, this process is likely to occur with difficulty due to bulky steric hindrance caused by the presence of a glycan at C3 in these compounds. Interestingly, fsoE can also utilize the aglycones isomotiol and 2-alpha-hydroxy-isomotiol as substrates to generate 19-beta-hydroxy-isomotiol and 2-alpha,19-beta-dihydroxy-isomotiol, respectively. These reactions occur with lower efficiency. Finally, fsoE can further convert 2-alpha,19-beta-dihydroxy-isomotiol into 2-alpha-hydroxy-ismotiol-19-one and 2-alpha-hydroxy-ismotiol-19-one into 2-deacetyl-3-deglucopyranosyl-fuscoatroside. The chain is Cytochrome P450 monooxygenase fsoD from Humicola fuscoatra.